Here is a 308-residue protein sequence, read N- to C-terminus: Aspartate carbamoyltransferase catalytic subunit (308 aa).

Residues R57 and T58 each coordinate carbamoyl phosphate. K86 lines the L-aspartate pocket. The carbamoyl phosphate site is built by R107, H135, and Q138. Positions 168 and 228 each coordinate L-aspartate. 2 residues coordinate carbamoyl phosphate: L267 and P268.

The protein belongs to the aspartate/ornithine carbamoyltransferase superfamily. ATCase family. Heterododecamer (2C3:3R2) of six catalytic PyrB chains organized as two trimers (C3), and six regulatory PyrI chains organized as three dimers (R2).

It catalyses the reaction carbamoyl phosphate + L-aspartate = N-carbamoyl-L-aspartate + phosphate + H(+). The protein operates within pyrimidine metabolism; UMP biosynthesis via de novo pathway; (S)-dihydroorotate from bicarbonate: step 2/3. Catalyzes the condensation of carbamoyl phosphate and aspartate to form carbamoyl aspartate and inorganic phosphate, the committed step in the de novo pyrimidine nucleotide biosynthesis pathway. This is Aspartate carbamoyltransferase catalytic subunit from Leptospira interrogans serogroup Icterohaemorrhagiae serovar Lai (strain 56601).